Here is a 164-residue protein sequence, read N- to C-terminus: Phosphopantetheine adenylyltransferase (164 aa).

Substrate is bound at residue threonine 10. ATP contacts are provided by residues 10–11 (TF) and histidine 18. The substrate site is built by lysine 42, leucine 74, and arginine 88. Residues 89-91 (GIR), glutamate 99, and 124-130 (YAFVSST) contribute to the ATP site.

It belongs to the bacterial CoaD family. In terms of assembly, homohexamer. Mg(2+) is required as a cofactor.

It is found in the cytoplasm. The catalysed reaction is (R)-4'-phosphopantetheine + ATP + H(+) = 3'-dephospho-CoA + diphosphate. The protein operates within cofactor biosynthesis; coenzyme A biosynthesis; CoA from (R)-pantothenate: step 4/5. Reversibly transfers an adenylyl group from ATP to 4'-phosphopantetheine, yielding dephospho-CoA (dPCoA) and pyrophosphate. The protein is Phosphopantetheine adenylyltransferase of Tolumonas auensis (strain DSM 9187 / NBRC 110442 / TA 4).